Consider the following 222-residue polypeptide: Putative ankyrin repeat protein L36 (222 aa).

7 ANK repeats span residues 1–14 (MVKY…NVDA), 15–44 (QNSR…NIYA), 45–74 (NDNH…NIRA), 76–104 (EDSA…TNYE), 105–134 (YSDY…KITD), 136–161 (AMFM…SLPC), and 163–191 (SYSE…KINK).

In Acanthamoeba polyphaga (Amoeba), this protein is Putative ankyrin repeat protein L36.